We begin with the raw amino-acid sequence, 552 residues long: Rqc2 homolog RqcH (552 aa).

Coiled-coil stretches lie at residues Arg-271 to Glu-317 and Asn-357 to Gln-398.

The protein belongs to the NEMF family. As to quaternary structure, associates with stalled 50S ribosomal subunits, binds to RqcH. Recombinant protein interacts with the N-terminal 30 kDa of human fibronectin (FN1).

Key component of the ribosome quality control system (RQC), a ribosome-associated complex that mediates the extraction of incompletely synthesized nascent chains from stalled ribosomes and their subsequent degradation. RqcH recruits Ala-charged tRNA, and with RqcP directs the elongation of stalled nascent chains on 50S ribosomal subunits, leading to non-templated C-terminal alanine extensions (Ala tail). The Ala tail promotes nascent chain degradation. May add between 1 and at least 8 Ala residues. Binds to stalled 50S ribosomal subunits. This is Rqc2 homolog RqcH from Streptococcus suis (strain 05ZYH33).